Consider the following 576-residue polypeptide: Putative ankyrin repeat protein L86 (576 aa).

ANK repeat units follow at residues 68-101, 118-147, 159-188, 192-223, 227-260, 264-300, 304-337, 341-373, 377-408, 412-446, and 448-480; these read HGWT…DPNI, TRIN…NVNF, SGGF…NPNI, KGNT…DLNS, KRKT…NPNI, KGNT…NPNI, SGIS…DPNI, QGLT…DPNI, KGKN…NPNA, KGRT…SLTD, and NGKK…TFDV.

In Acanthamoeba polyphaga mimivirus (APMV), this protein is Putative ankyrin repeat protein L86.